Consider the following 185-residue polypeptide: Ribosome-recycling factor (185 aa).

Belongs to the RRF family.

It localises to the cytoplasm. In terms of biological role, responsible for the release of ribosomes from messenger RNA at the termination of protein biosynthesis. May increase the efficiency of translation by recycling ribosomes from one round of translation to another. This chain is Ribosome-recycling factor, found in Lactococcus lactis subsp. lactis (strain IL1403) (Streptococcus lactis).